Consider the following 88-residue polypeptide: Co-chaperonin GroES (88 aa).

It belongs to the GroES chaperonin family. Heptamer of 7 subunits arranged in a ring. Interacts with the chaperonin GroEL.

It is found in the cytoplasm. Its function is as follows. Together with the chaperonin GroEL, plays an essential role in assisting protein folding. The GroEL-GroES system forms a nano-cage that allows encapsulation of the non-native substrate proteins and provides a physical environment optimized to promote and accelerate protein folding. GroES binds to the apical surface of the GroEL ring, thereby capping the opening of the GroEL channel. In Treponema denticola (strain ATCC 35405 / DSM 14222 / CIP 103919 / JCM 8153 / KCTC 15104), this protein is Co-chaperonin GroES.